Consider the following 1323-residue polypeptide: Glutamate receptor ionotropic, NMDA 2D (1323 aa).

Positions 1–27 (MRGAGGPRGPRGPAKMLLLLALACASP) are cleaved as a signal peptide. The Extracellular segment spans residues 28–579 (FPEEVPGPGA…SPSAFLEPYS (552 aa)). N89 carries an N-linked (GlcNAc...) asparagine glycan. A disulfide bridge links C101 with C345. N-linked (GlcNAc...) asparagine glycans are attached at residues N349, N363, N381, and N464. 2 disulfide bridges follow: C452–C480 and C459–C481. The L-glutamate site is built by S536, T538, and R543. N566 carries an N-linked (GlcNAc...) asparagine glycan. The chain crosses the membrane as a helical span at residues 580–601 (PAVWVMMFVMCLTVVAVTVFIF). Residues 602 to 626 (EYLSPVGYNRSLATGKRPGGSTFTI) are Cytoplasmic-facing. The segment at residues 627–638 (GKSIWLLWALVF) is an intramembrane region (discontinuously helical). A pore-forming region spans residues 628 to 647 (KSIWLLWALVFNNSVPVENP). At 639 to 650 (NNSVPVENPRGT) the chain is on the cytoplasmic side. Residues 651–671 (TSKIMVLVWAFFAVIFLASYT) traverse the membrane as a helical segment. At 672-840 (ANLAAFMIQE…EVMSSKLDID (169 aa)) the chain is on the extracellular side. N712 carries N-linked (GlcNAc...) asparagine glycosylation. L-glutamate-binding residues include S714, T715, and D756. C770 and C825 are oxidised to a cystine. The helical transmembrane segment at 841–864 (NMAGVFYMLLVAMGLSLLVFAWEH) threads the bilayer. Residues 865 to 1323 (LVYWRLRHCL…AHFSSLESEV (459 aa)) lie on the Cytoplasmic side of the membrane. Disordered regions lie at residues 897 to 952 (EAAP…PGGA), 977 to 1112 (AAPR…SLGG), and 1201 to 1323 (PWAA…ESEV). The span at 899 to 929 (APPPAKPPPPPQPLPSPAYPAARPPPGPAPF) shows a compositional bias: pro residues. The span at 931 to 940 (PRERAAADRW) shows a compositional bias: basic and acidic residues. Over residues 977–986 (AAPRGAAGRP) the composition is skewed to low complexity. Over residues 987 to 1001 (LSPPTTQPPQKPPPS) the composition is skewed to pro residues. Residues 1030–1039 (AAAAAAVGPP) are compositionally biased toward low complexity. Positions 1080 to 1092 (TAPPPRRAAPPPC) are enriched in pro residues. Residues 1208–1228 (PRRRARCGCPRPHPHRPRASH) are compositionally biased toward basic residues. R1303 carries the omega-N-methylarginine modification. The residue at position 1313 (S1313) is a Phosphoserine. A PDZ-binding motif is present at residues 1321-1323 (SEV).

This sequence belongs to the glutamate-gated ion channel (TC 1.A.10.1) family. NR2D/GRIN2D subfamily. As to quaternary structure, heterotetramer. Forms heterotetrameric channels composed of two GluN1/zeta subunits (GRIN1), and two identical GluN2/epsilon subunits (GRIN2A, GRIN2B, GRIN2C or GRIN2D) or GluN3 subunits (GRIN3A or GRIN3B) (in vitro). In vivo, the subunit composition may depend on the expression levels of the different subunits. Interacts with PDZ domains of PATJ and DLG4. As to expression, detected in neonate brain synaptosomes (at protein level).

Its subcellular location is the cell membrane. The protein localises to the postsynaptic cell membrane. It carries out the reaction Ca(2+)(in) = Ca(2+)(out). The enzyme catalyses Na(+)(in) = Na(+)(out). The catalysed reaction is K(+)(in) = K(+)(out). Functionally, component of N-methyl-D-aspartate (NMDA) receptors (NMDARs) that function as heterotetrameric, ligand-gated cation channels with high calcium permeability and voltage-dependent block by Mg(2+). Participates in synaptic plasticity for learning and memory formation. Channel activation requires binding of the neurotransmitter L-glutamate to the GluN2 subunit, glycine or D-serine binding to the GluN1 subunit, plus membrane depolarization to eliminate channel inhibition by Mg(2+). NMDARs mediate simultaneously the potasium efflux and the influx of calcium and sodium. Each GluN2 subunit confers differential attributes to channel properties, including activation, deactivation and desensitization kinetics, pH sensitivity, Ca2(+) permeability, and binding to allosteric modulators. The polypeptide is Glutamate receptor ionotropic, NMDA 2D (Mus musculus (Mouse)).